The sequence spans 297 residues: Homoserine kinase (297 aa).

ATP is bound at residue Pro-82 to Ala-92.

The protein belongs to the GHMP kinase family. Homoserine kinase subfamily.

It is found in the cytoplasm. It carries out the reaction L-homoserine + ATP = O-phospho-L-homoserine + ADP + H(+). Its pathway is amino-acid biosynthesis; L-threonine biosynthesis; L-threonine from L-aspartate: step 4/5. In terms of biological role, catalyzes the ATP-dependent phosphorylation of L-homoserine to L-homoserine phosphate. This is Homoserine kinase from Clostridium botulinum (strain Loch Maree / Type A3).